Reading from the N-terminus, the 159-residue chain is Ribosomal RNA large subunit methyltransferase H (159 aa).

S-adenosyl-L-methionine contacts are provided by residues leucine 76, glycine 108, and 127 to 132; that span reads FGLLTL.

It belongs to the RNA methyltransferase RlmH family. In terms of assembly, homodimer.

It is found in the cytoplasm. The enzyme catalyses pseudouridine(1915) in 23S rRNA + S-adenosyl-L-methionine = N(3)-methylpseudouridine(1915) in 23S rRNA + S-adenosyl-L-homocysteine + H(+). Specifically methylates the pseudouridine at position 1915 (m3Psi1915) in 23S rRNA. The chain is Ribosomal RNA large subunit methyltransferase H from Streptococcus mutans serotype c (strain ATCC 700610 / UA159).